We begin with the raw amino-acid sequence, 128 residues long: Putative esterase aq_1494 (128 aa).

Asp15 is a catalytic residue.

This sequence belongs to the 4-hydroxybenzoyl-CoA thioesterase family.

This is Putative esterase aq_1494 from Aquifex aeolicus (strain VF5).